We begin with the raw amino-acid sequence, 101 residues long: Small ribosomal subunit protein uS14 (101 aa).

Belongs to the universal ribosomal protein uS14 family. As to quaternary structure, part of the 30S ribosomal subunit. Contacts proteins S3 and S10.

Binds 16S rRNA, required for the assembly of 30S particles and may also be responsible for determining the conformation of the 16S rRNA at the A site. This chain is Small ribosomal subunit protein uS14, found in Pseudomonas putida (strain ATCC 47054 / DSM 6125 / CFBP 8728 / NCIMB 11950 / KT2440).